A 240-amino-acid chain; its full sequence is DUP240 protein DFP1 (240 aa).

Residues 1–29 (MQPYLKKNTHATDDPKASPLKEGSPDNPE) form a disordered region. The next 2 helical transmembrane spans lie at 61–81 (IMIN…DIWF) and 84–104 (VLSP…VLQI).

Belongs to the DUP/COS family.

It is found in the membrane. The sequence is that of DUP240 protein DFP1 from Saccharomyces cerevisiae (Baker's yeast).